The chain runs to 289 residues: Tachykinins (289 aa).

A signal peptide spans 1–24 (MRPLSGLIALALLLLLLLTAPSSA). The disordered stretch occupies residues 24–94 (AADTETESSG…DEEADSSYAE (71 aa)). Residues 25-47 (ADTETESSGSPLTPGAEEPRRVV) constitute a propeptide that is removed on maturation. Arginine 59 is subject to Arginine amide. The segment covering 60–69 (GKKDEEHDTS) has biased composition (basic and acidic residues). Asparagine amide is present on asparagine 95. At arginine 110 the chain carries Arginine amide. Valine 153 carries the valine amide modification. Arginine amide is present on residues arginine 165, arginine 200, arginine 239, and arginine 281. A propeptide spanning residues 285–289 (PALFE) is cleaved from the precursor.

This sequence belongs to the tachykinin family. In terms of tissue distribution, strong expression is seen in a group of 14 cells plus one isolated cell in the midgut of stage 17 embryos. Also expressed in a pair of medially located unidentified cells, just posterior to the brain, and in two lateral groups of cells that may be associated with tracheae. Expression in the larval gut is restricted to cells with endocrine cell-like morphology in the posterior midgut, just anterior to the malphigian tubules. In the brain, expression is detected in a restricted number of neuronal cell bodies. Expression in the adult female gut is restricted to the midgut with no expression detected in the hindgut.

Its subcellular location is the secreted. Functionally, tachykinins are active peptides which excite neurons, evoke behavioral responses, are potent vasodilators and secretagogues, and contract (directly or indirectly) many smooth muscles. Stimulates gut muscle contractions. Required for the response to the male sex pheromone CH503 which is transferred from males to females during mating and inhibits courtship behavior by other males. The Gr68a gustatory receptor is required for detection of the pheromone and Gr68a-expressing neurons in the male foreleg relay signals to the suboesophageal zone (SEZ) which leads to courtship suppression through release of tachykinin from a cluster of 8-10 neurons in the SEZ. The polypeptide is Tachykinins (Drosophila melanogaster (Fruit fly)).